The sequence spans 420 residues: Phosphoribosylamine--glycine ligase (420 aa).

The region spanning 108-314 (KQIMVKYGIP…FAQNIDDILH (207 aa)) is the ATP-grasp domain. 134-195 (IEEQGAPIVV…EEFLAGEEFS (62 aa)) contributes to the ATP binding site. The Mg(2+) site is built by glutamate 284 and asparagine 286.

This sequence belongs to the GARS family. Mg(2+) is required as a cofactor. Mn(2+) serves as cofactor.

It catalyses the reaction 5-phospho-beta-D-ribosylamine + glycine + ATP = N(1)-(5-phospho-beta-D-ribosyl)glycinamide + ADP + phosphate + H(+). The protein operates within purine metabolism; IMP biosynthesis via de novo pathway; N(1)-(5-phospho-D-ribosyl)glycinamide from 5-phospho-alpha-D-ribose 1-diphosphate: step 2/2. In Streptococcus suis, this protein is Phosphoribosylamine--glycine ligase.